The sequence spans 680 residues: DNA ligase (680 aa).

Residues 35-39 (DADFD), 86-87 (SL), and Glu111 each bind NAD(+). Residue Lys113 is the N6-AMP-lysine intermediate of the active site. 4 residues coordinate NAD(+): Arg134, Glu174, Lys290, and Lys314. Zn(2+) contacts are provided by Cys408, Cys411, Cys427, and Cys433. Residues 597–680 (VAEQTLEGLT…RLLNTGSADE (84 aa)) form the BRCT domain.

The protein belongs to the NAD-dependent DNA ligase family. LigA subfamily. The cofactor is Mg(2+). Mn(2+) is required as a cofactor.

It carries out the reaction NAD(+) + (deoxyribonucleotide)n-3'-hydroxyl + 5'-phospho-(deoxyribonucleotide)m = (deoxyribonucleotide)n+m + AMP + beta-nicotinamide D-nucleotide.. Its function is as follows. DNA ligase that catalyzes the formation of phosphodiester linkages between 5'-phosphoryl and 3'-hydroxyl groups in double-stranded DNA using NAD as a coenzyme and as the energy source for the reaction. It is essential for DNA replication and repair of damaged DNA. In Corynebacterium glutamicum (strain ATCC 13032 / DSM 20300 / JCM 1318 / BCRC 11384 / CCUG 27702 / LMG 3730 / NBRC 12168 / NCIMB 10025 / NRRL B-2784 / 534), this protein is DNA ligase.